A 421-amino-acid polypeptide reads, in one-letter code: Cyclin-A1 (421 aa).

Residues methionine 1 to aspartate 20 form a disordered region.

Belongs to the cyclin family. Cyclin AB subfamily. Interacts with the CDK2 and the CDC2 protein kinases to form a serine/threonine kinase holoenzyme complex. The cyclin subunit imparts substrate specificity to the complex. Does not bind CDK4 and CDK5 (in vitro). The cyclin A1-CDK2 complex interacts with transcription factor E2F-1 and RB proteins. Found in a complex with CDK2, CABLES1 and CCNE1. Interacts with INCA1 and KLHDC9. In terms of processing, polyubiquitinated via 'Lys-11'-linked ubiquitin by the anaphase-promoting complex (APC/C), leading to its degradation by the proteasome. Deubiquitinated and stabilized by USP37 enables entry into S phase. Ubiquitinated during the G1 phase by the SCF(FBXO31) complex, leading to its proteasomal degradation.

The protein resides in the nucleus. Its function is as follows. May be involved in the control of the cell cycle at the G1/S (start) and G2/M (mitosis) transitions. May primarily function in the control of the germline meiotic cell cycle and additionally in the control of mitotic cell cycle in some somatic cells. This chain is Cyclin-A1 (Ccna1), found in Rattus norvegicus (Rat).